We begin with the raw amino-acid sequence, 316 residues long: Ribosomal RNA small subunit methyltransferase H (316 aa).

S-adenosyl-L-methionine contacts are provided by residues 35-37 (AGH), aspartate 55, phenylalanine 84, aspartate 105, and glutamine 112.

This sequence belongs to the methyltransferase superfamily. RsmH family.

It is found in the cytoplasm. It carries out the reaction cytidine(1402) in 16S rRNA + S-adenosyl-L-methionine = N(4)-methylcytidine(1402) in 16S rRNA + S-adenosyl-L-homocysteine + H(+). In terms of biological role, specifically methylates the N4 position of cytidine in position 1402 (C1402) of 16S rRNA. In Streptococcus pneumoniae (strain Hungary19A-6), this protein is Ribosomal RNA small subunit methyltransferase H.